The sequence spans 1373 residues: Insulin-like growth factor 1 receptor (1373 aa).

The N-terminal stretch at 1-30 (MKSGSGGGSPTSLWGLVFLSAALSLWPTSG) is a signal peptide. Cys33 and Cys52 are joined by a disulfide. Asn51, Asn102, and Asn135 each carry an N-linked (GlcNAc...) asparagine glycan. Disulfide bonds link Cys150/Cys178, Cys182/Cys205, Cys192/Cys211, Cys215/Cys224, Cys219/Cys230, Cys231/Cys239, Cys235/Cys248, Cys251/Cys260, Cys264/Cys276, Cys282/Cys303, Cys307/Cys321, Cys324/Cys328, and Cys332/Cys354. N-linked (GlcNAc...) asparagine glycosylation is present at Asn245. Residue Asn314 is glycosylated (N-linked (GlcNAc...) asparagine). 2 N-linked (GlcNAc...) asparagine glycosylation sites follow: Asn418 and Asn439. A disulfide bridge connects residues Cys456 and Cys489. Fibronectin type-III domains lie at 490 to 610 (ESDV…TNAS), 611 to 709 (VPSI…TEAE), 735 to 829 (RPER…TMPA), and 835 to 928 (IPGP…VPAK). N-linked (GlcNAc...) asparagine glycosylation is found at Asn535, Asn608, Asn623, Asn641, Asn748, Asn757, Asn765, Asn901, and Asn914. At 742–936 (DVMQVANTTM…AKTTYENFMH (195 aa)) the chain is on the extracellular side. Residues 937–960 (LIIALPVAILLIVGGLVIMLYVFH) form a helical membrane-spanning segment. Residues 961–1373 (RKRNNSRLGN…ALPLPQSSTC (413 aa)) are Cytoplasmic-facing. Positions 978 to 981 (NPEY) match the IRS1- and SHC1-binding motif. A Phosphotyrosine modification is found at Tyr981. The 277-residue stretch at 1000–1276 (ITMNRELGQG…SIKDEMEPSF (277 aa)) folds into the Protein kinase domain. Residues 1006 to 1014 (LGQGSFGMV) and Lys1034 contribute to the ATP site. Asp1137 (proton acceptor) is an active-site residue. A phosphotyrosine; by autocatalysis mark is found at Tyr1163, Tyr1167, and Tyr1168. Glycyl lysine isopeptide (Lys-Gly) (interchain with G-Cter in ubiquitin) cross-links involve residues Lys1170 and Lys1173. Ser1280 carries the post-translational modification Phosphoserine; by GSK3-beta. Positions 1283 to 1373 (YSEENKPPEP…ALPLPQSSTC (91 aa)) are disordered. The residue at position 1284 (Ser1284) is a Phosphoserine. Residues 1292–1305 (PEELEMELEMEPEN) show a composition bias toward acidic residues. Positions 1306 to 1322 (MESVPLDPSASSASLPL) are enriched in low complexity. A compositionally biased stretch (basic and acidic residues) spans 1323–1332 (PERHSGHKAE).

Belongs to the protein kinase superfamily. Tyr protein kinase family. Insulin receptor subfamily. Tetramer of 2 alpha and 2 beta chains linked by disulfide bonds. The alpha chains contribute to the formation of the ligand-binding domain, while the beta chain carries the kinase domain. Interacts with PIK3R1 and with the PTB/PID domains of IRS1 and SHC1 in vitro when autophosphorylated on tyrosine residues. Forms a hybrid receptor with INSR, the hybrid is a tetramer consisting of 1 alpha chain and 1 beta chain of INSR and 1 alpha chain and 1 beta chain of IGF1R. Interacts with ARRB1 and ARRB2. Interacts with GRB10. Interacts with RACK1. Interacts with SOCS1, SOCS2 and SOCS3. Interacts with 14-3-3 proteins. Interacts with NMD2. Interacts with MAP3K5. Interacts with STAT3. Found in a ternary complex with IGF1 and ITGAV:ITGB3 or ITGA6:ITGB4. Interacts (nascent precursor form) with ZFAND2B. Post-translationally, autophosphorylated on tyrosine residues in response to ligand binding. Autophosphorylation occurs in trans, i.e. one subunit of the dimeric receptor phosphorylates tyrosine residues on the other subunit. Autophosphorylation occurs in a sequential manner; Tyr-1167 is predominantly phosphorylated first, followed by phosphorylation of Tyr-1163 and Tyr-1168. While every single phosphorylation increases kinase activity, all three tyrosine residues in the kinase activation loop (Tyr-1163, Tyr-1167 and Tyr-1168) have to be phosphorylated for optimal activity. Can be autophosphorylated at additional tyrosine residues (in vitro). Autophosphorylated is followed by phosphorylation of juxtamembrane tyrosines and C-terminal serines. May also be phosphorylated at Tyr-1163 and Tyr-1168 by mTORC2. Phosphorylation of Tyr-981 is required for IRS1- and SHC1-binding. Phosphorylation of Ser-1280 by GSK-3beta restrains kinase activity and promotes cell surface expression, it requires a priming phosphorylation at Ser-1284. Dephosphorylated by PTPN1. Polyubiquitinated at Lys-1170 and Lys-1173 through both 'Lys-48' and 'Lys-29' linkages, promoting receptor endocytosis and subsequent degradation by the proteasome. Ubiquitination is facilitated by pre-existing phosphorylation. In terms of processing, sumoylated with SUMO1. Post-translationally, controlled by regulated intramembrane proteolysis (RIP). Undergoes metalloprotease-dependent constitutive ectodomain shedding to produce a membrane-anchored 52 kDa C-Terminal fragment which is further processed by presenilin gamma-secretase to yield an intracellular 50 kDa fragment.

The protein localises to the cell membrane. The catalysed reaction is L-tyrosyl-[protein] + ATP = O-phospho-L-tyrosyl-[protein] + ADP + H(+). With respect to regulation, activated by autophosphorylation at Tyr-1163, Tyr-1167 and Tyr-1168 on the kinase activation loop; phosphorylation at all three tyrosine residues is required for optimal kinase activity. Inhibited by MSC1609119A-1, BMS-754807, PQIP, benzimidazole pyridinone, isoquinolinedione, bis-azaindole, 3-cyanoquinoline, 2,4-bis-arylamino-1,3-pyrimidine, pyrrolopyrimidine, pyrrole-5-carboxaldehyde, picropodophyllin (PPP), tyrphostin derivatives. While most inhibitors bind to the ATP binding pocket, MSC1609119A-1 functions as allosteric inhibitor and binds close to the DFG motif and the activation loop. Its function is as follows. Receptor tyrosine kinase which mediates actions of insulin-like growth factor 1 (IGF1). Binds IGF1 with high affinity and IGF2 and insulin (INS) with a lower affinity. The activated IGF1R is involved in cell growth and survival control. IGF1R is crucial for tumor transformation and survival of malignant cell. Ligand binding activates the receptor kinase, leading to receptor autophosphorylation, and tyrosines phosphorylation of multiple substrates, that function as signaling adapter proteins including, the insulin-receptor substrates (IRS1/2), Shc and 14-3-3 proteins. Phosphorylation of IRSs proteins lead to the activation of two main signaling pathways: the PI3K-AKT/PKB pathway and the Ras-MAPK pathway. The result of activating the MAPK pathway is increased cellular proliferation, whereas activating the PI3K pathway inhibits apoptosis and stimulates protein synthesis. Phosphorylated IRS1 can activate the 85 kDa regulatory subunit of PI3K (PIK3R1), leading to activation of several downstream substrates, including protein AKT/PKB. AKT phosphorylation, in turn, enhances protein synthesis through mTOR activation and triggers the antiapoptotic effects of IGFIR through phosphorylation and inactivation of BAD. In parallel to PI3K-driven signaling, recruitment of Grb2/SOS by phosphorylated IRS1 or Shc leads to recruitment of Ras and activation of the ras-MAPK pathway. In addition to these two main signaling pathways IGF1R signals also through the Janus kinase/signal transducer and activator of transcription pathway (JAK/STAT). Phosphorylation of JAK proteins can lead to phosphorylation/activation of signal transducers and activators of transcription (STAT) proteins. In particular activation of STAT3, may be essential for the transforming activity of IGF1R. The JAK/STAT pathway activates gene transcription and may be responsible for the transforming activity. JNK kinases can also be activated by the IGF1R. IGF1 exerts inhibiting activities on JNK activation via phosphorylation and inhibition of MAP3K5/ASK1, which is able to directly associate with the IGF1R. When present in a hybrid receptor with INSR, binds IGF1. The polypeptide is Insulin-like growth factor 1 receptor (Igf1r) (Mus musculus (Mouse)).